The following is a 211-amino-acid chain: Cytochrome c biogenesis ATP-binding export protein CcmA (211 aa).

An ABC transporter domain is found at 6–211; the sequence is LQTVALACER…RDIDLGNWAV (206 aa). 38–45 contacts ATP; the sequence is GPNGSGKT.

The protein belongs to the ABC transporter superfamily. CcmA exporter (TC 3.A.1.107) family. The complex is composed of two ATP-binding proteins (CcmA) and two transmembrane proteins (CcmB).

Its subcellular location is the cell inner membrane. The catalysed reaction is heme b(in) + ATP + H2O = heme b(out) + ADP + phosphate + H(+). Its function is as follows. Part of the ABC transporter complex CcmAB involved in the biogenesis of c-type cytochromes; once thought to export heme, this seems not to be the case, but its exact role is uncertain. Responsible for energy coupling to the transport system. The polypeptide is Cytochrome c biogenesis ATP-binding export protein CcmA (Pseudomonas fluorescens (strain Pf0-1)).